A 135-amino-acid polypeptide reads, in one-letter code: Transcription antitermination protein NusB (135 aa).

This sequence belongs to the NusB family.

Its function is as follows. Involved in transcription antitermination. Required for transcription of ribosomal RNA (rRNA) genes. Binds specifically to the boxA antiterminator sequence of the ribosomal RNA (rrn) operons. This chain is Transcription antitermination protein NusB, found in Bdellovibrio bacteriovorus (strain ATCC 15356 / DSM 50701 / NCIMB 9529 / HD100).